The sequence spans 274 residues: Single-stranded DNA-binding protein WHY1, chloroplastic (274 aa).

The N-terminal 54 residues, Met-1–Lys-54, are a transit peptide targeting the chloroplast. The required for ssDNA binding stretch occupies residues Lys-100–Leu-105. The Nuclear localization signal signature appears at Lys-178–Lys-191. A disordered region spans residues Pro-253–Arg-274.

Belongs to the Whirly family. Homotetramer.

The protein resides in the nucleus. Its subcellular location is the plastid. The protein localises to the chloroplast. Single-stranded DNA-binding protein that acts as a transcriptional activator of the pathogenesis-related gene PR-10a. Upon elicitation, binds a 30bp promoter sequence known as elicitor element response (ERE) and is required for PR-10a expression. The polypeptide is Single-stranded DNA-binding protein WHY1, chloroplastic (WHY1) (Solanum tuberosum (Potato)).